The following is a 142-amino-acid chain: Hemoglobin subunit alpha (142 aa).

Positions valine 2–arginine 142 constitute a Globin domain. Serine 4 carries the phosphoserine modification. Lysine 8 and lysine 12 each carry N6-succinyllysine. Residue lysine 17 is modified to N6-acetyllysine; alternate. Position 17 is an N6-succinyllysine; alternate (lysine 17). Tyrosine 25 carries the post-translational modification Phosphotyrosine. Serine 36 is subject to Phosphoserine. Lysine 41 carries the post-translational modification N6-succinyllysine. Serine 50 carries the post-translational modification Phosphoserine. O2 is bound at residue histidine 59. Histidine 88 is a heme b binding site. Serine 103 is modified (phosphoserine). Position 109 is a phosphothreonine (threonine 109). Serine 125 carries the phosphoserine modification. Phosphothreonine occurs at positions 135 and 138. Position 139 is a phosphoserine (serine 139).

Belongs to the globin family. In terms of assembly, heterotetramer of two alpha chains and two beta chains. In terms of tissue distribution, red blood cells.

Its function is as follows. Involved in oxygen transport from the lung to the various peripheral tissues. Hemopressin acts as an antagonist peptide of the cannabinoid receptor CNR1. Hemopressin-binding efficiently blocks cannabinoid receptor CNR1 and subsequent signaling. The sequence is that of Hemoglobin subunit alpha (HBA) from Ursus maritimus (Polar bear).